A 375-amino-acid polypeptide reads, in one-letter code: Succinyl-diaminopimelate desuccinylase (375 aa).

Zn(2+) is bound at residue H66. Residue D68 is part of the active site. D99 lines the Zn(2+) pocket. E133 serves as the catalytic Proton acceptor. Zn(2+)-binding residues include E134, E162, and H348.

It belongs to the peptidase M20A family. DapE subfamily. In terms of assembly, homodimer. Zn(2+) serves as cofactor. The cofactor is Co(2+).

The catalysed reaction is N-succinyl-(2S,6S)-2,6-diaminopimelate + H2O = (2S,6S)-2,6-diaminopimelate + succinate. It participates in amino-acid biosynthesis; L-lysine biosynthesis via DAP pathway; LL-2,6-diaminopimelate from (S)-tetrahydrodipicolinate (succinylase route): step 3/3. In terms of biological role, catalyzes the hydrolysis of N-succinyl-L,L-diaminopimelic acid (SDAP), forming succinate and LL-2,6-diaminopimelate (DAP), an intermediate involved in the bacterial biosynthesis of lysine and meso-diaminopimelic acid, an essential component of bacterial cell walls. This Yersinia enterocolitica serotype O:8 / biotype 1B (strain NCTC 13174 / 8081) protein is Succinyl-diaminopimelate desuccinylase.